The sequence spans 254 residues: Very-long-chain (3R)-3-hydroxyacyl-CoA dehydratase 2 (254 aa).

Ala2 carries the N-acetylalanine modification. Over 2–41 (AAVAATAAAKGNGGGGGRAGAGDASGTRKKKGPGPLATAY) the chain is Cytoplasmic. A disordered region spans residues 11 to 33 (KGNGGGGGRAGAGDASGTRKKKG). Residues 12–21 (GNGGGGGRAG) are compositionally biased toward gly residues. Residues 42–60 (LVIYNVVMTAGWLVIAVGL) form a helical membrane-spanning segment. Residues 61 to 79 (VRAYLAKGSYHSLYYSIEK) are Lumenal-facing. Residues 80 to 97 (PLKFFQTGALLEILHCAI) form a helical membrane-spanning segment. At 98 to 107 (GIVPSSVVLT) the chain is on the cytoplasmic side. A helical transmembrane segment spans residues 108-125 (SFQVMSRVFLIWAVTHSV). The Lumenal segment spans residues 126–130 (KEVQS). Residues 131 to 146 (EDSVLLFVIAWTITEI) traverse the membrane as a helical segment. At 147–169 (IRYSFYTFSLLNHLPYLIKWARY) the chain is on the cytoplasmic side. Residues 170–187 (TLFIVLYPMGVSGELLTI) form a helical membrane-spanning segment. Catalysis depends on residues Tyr176 and Glu183. Over 188–217 (YAALPFVRQAGLYSISLPNKYNFSFDYYAF) the chain is Lumenal. Positions 198–214 (GLYSISLPNKYNFSFDY) are may be involved in interaction with TECR. An N-linked (GlcNAc...) asparagine glycan is attached at Asn209. A helical transmembrane segment spans residues 218-235 (LILIMISYIPIFPQLYFH). Residues 236-254 (MIHQRRKILSHTEEHKKFE) are Cytoplasmic-facing.

It belongs to the very long-chain fatty acids dehydratase HACD family. May interact with enzymes of the ELO family (including ELOVL1); with those enzymes that mediate condensation, the first of the four steps of the reaction cycle responsible for fatty acids elongation, may be part of a larger fatty acids elongase complex. Interacts with BCAP31. Interacts (via the third lumenal loop) with TECR. As to expression, highly expressed in testis, spleen, prostate, colon and heart, followed by moderate expression in thymus, ovary, small intestine, peripheral blood leukocytes, liver, skeletal muscle and pancreas. Weakly detected in kidney, placenta, brain and lung.

The protein resides in the endoplasmic reticulum membrane. The enzyme catalyses a very-long-chain (3R)-3-hydroxyacyl-CoA = a very-long-chain (2E)-enoyl-CoA + H2O. The catalysed reaction is (3R)-hydroxyhexadecanoyl-CoA = (2E)-hexadecenoyl-CoA + H2O. It catalyses the reaction (3R)-hydroxyoctadecanoyl-CoA = (2E)-octadecenoyl-CoA + H2O. It carries out the reaction (3R)-hydroxyeicosanoyl-CoA = (2E)-eicosenoyl-CoA + H2O. The enzyme catalyses (3R)-hydroxydocosanoyl-CoA = (2E)-docosenoyl-CoA + H2O. The catalysed reaction is (3R)-hydroxytetracosanoyl-CoA = (2E)-tetracosenoyl-CoA + H2O. It catalyses the reaction (3R)-hydroxyhexacosanoyl-CoA = (2E)-hexacosenoyl-CoA + H2O. It functions in the pathway lipid metabolism; fatty acid biosynthesis. In terms of biological role, catalyzes the third of the very long-chain fatty acids (VLCFA) elongation four-step cycle (condensation, reduction, dehydration, and reduction). This endoplasmic reticulum-elongation process is characterized by the addition of two carbons to the lipid chain through each cycle. This enzyme catalyzes the dehydration of the 3-hydroxyacyl-CoA intermediate into trans-2,3-enoyl-CoA, within each cycle of elongation. Therefore, it participates in the production of various VLCFAs involved in multiple biological processes as precursors of membrane lipids and lipid mediators. This Homo sapiens (Human) protein is Very-long-chain (3R)-3-hydroxyacyl-CoA dehydratase 2.